The sequence spans 436 residues: Methylenetetrahydrofolate--tRNA-(uracil-5-)-methyltransferase TrmFO (436 aa).

9–14 (GAGLAG) contributes to the FAD binding site.

Belongs to the MnmG family. TrmFO subfamily. The cofactor is FAD.

The protein localises to the cytoplasm. The catalysed reaction is uridine(54) in tRNA + (6R)-5,10-methylene-5,6,7,8-tetrahydrofolate + NADH + H(+) = 5-methyluridine(54) in tRNA + (6S)-5,6,7,8-tetrahydrofolate + NAD(+). It carries out the reaction uridine(54) in tRNA + (6R)-5,10-methylene-5,6,7,8-tetrahydrofolate + NADPH + H(+) = 5-methyluridine(54) in tRNA + (6S)-5,6,7,8-tetrahydrofolate + NADP(+). Catalyzes the folate-dependent formation of 5-methyl-uridine at position 54 (M-5-U54) in all tRNAs. The polypeptide is Methylenetetrahydrofolate--tRNA-(uracil-5-)-methyltransferase TrmFO (Acetivibrio thermocellus (strain ATCC 27405 / DSM 1237 / JCM 9322 / NBRC 103400 / NCIMB 10682 / NRRL B-4536 / VPI 7372) (Clostridium thermocellum)).